The primary structure comprises 313 residues: E3 ubiquitin-protein ligase SGIP1 (313 aa).

The 50-residue stretch at 16-65 (REYSKEIPIDLLIEIFSRLSTGDIARCRCVSKIWSSVPRLRDFTELFLKI) folds into the F-box domain.

As to quaternary structure, interacts with SGS3 in cytoplasmic granules.

The protein localises to the cytoplasmic granule. The enzyme catalyses S-ubiquitinyl-[E2 ubiquitin-conjugating enzyme]-L-cysteine + [acceptor protein]-L-lysine = [E2 ubiquitin-conjugating enzyme]-L-cysteine + N(6)-ubiquitinyl-[acceptor protein]-L-lysine.. The protein operates within protein degradation; proteasomal ubiquitin-dependent pathway. It functions in the pathway protein modification; protein ubiquitination. E3 ubiquitin-protein ligase which triggers the ubiquitination and subsequent degradation of SGS3 in response to heat. Involved in the mechanisms necessary for quick response to heat and subsequent heritable transgenerational memory of heat acclimation (global warming) such as early flowering and attenuated immunity; this process includes epigenetic regulation as well as post-transcriptional gene silencing (PTGS). In response to heat, HSFA2 is activated and promotes the expression of REF6 which in turn derepresses HSFA2, thus establishing an inheritable feedback loop able to trigger SGIP1 and subsequent SGIP1-mediated SGS3 degradation; this prevents the biosynthesis of trans-acting siRNA (tasiRNA) and leads to the release of HTT5, which drives early flowering but attenuates immunity. This chain is E3 ubiquitin-protein ligase SGIP1, found in Arabidopsis thaliana (Mouse-ear cress).